Here is an 812-residue protein sequence, read N- to C-terminus: Phospholipase D alpha 1 (812 aa).

Residues 1 to 46 (MAQMLLHGTLHATIFEAASLSNPHRASGSAPKFIRKFVEGIEDTVG) constitute a propeptide that is removed on maturation. The C2 domain maps to 1–130 (MAQMLLHGTL…LNGEEIDRWL (130 aa)). Ca(2+) is bound at residue Asp-190. The PLD phosphodiesterase 1 domain maps to 330–368 (TMFTHHQKIVVVDHELPNQGSQQRRIVSFVGGLDLCDGR). Catalysis depends on residues His-335, Lys-337, and Asp-342. His-335 is an a 1,2-diacyl-sn-glycero-3-phosphate binding site. Ca(2+) is bound by residues His-374 and His-408. The a 1,2-diacyl-sn-glycero-3-phosphate site is built by Gln-524 and His-663. The region spanning 658–685 (FMIYVHTKMMIVDDEYIIIGSANINQRS) is the PLD phosphodiesterase 2 domain. Residues His-663, Lys-665, and Asp-670 contribute to the active site. A Ca(2+)-binding site is contributed by Glu-724.

This sequence belongs to the phospholipase D family. C2-PLD subfamily. In terms of assembly, monomer. Requires Ca(2+) as cofactor. Expressed in leaves, roots, developing seeds and cultured cells.

The enzyme catalyses a 1,2-diacyl-sn-glycero-3-phosphocholine + H2O = a 1,2-diacyl-sn-glycero-3-phosphate + choline + H(+). Hydrolyzes glycerol-phospholipids at the terminal phosphodiesteric bond. Plays an important role in various cellular processes. The chain is Phospholipase D alpha 1 (PLD1) from Oryza sativa subsp. japonica (Rice).